A 177-amino-acid chain; its full sequence is ATP synthase subunit delta (177 aa).

The protein belongs to the ATPase delta chain family. In terms of assembly, F-type ATPases have 2 components, F(1) - the catalytic core - and F(0) - the membrane proton channel. F(1) has five subunits: alpha(3), beta(3), gamma(1), delta(1), epsilon(1). F(0) has three main subunits: a(1), b(2) and c(10-14). The alpha and beta chains form an alternating ring which encloses part of the gamma chain. F(1) is attached to F(0) by a central stalk formed by the gamma and epsilon chains, while a peripheral stalk is formed by the delta and b chains.

It localises to the cell inner membrane. Functionally, f(1)F(0) ATP synthase produces ATP from ADP in the presence of a proton or sodium gradient. F-type ATPases consist of two structural domains, F(1) containing the extramembraneous catalytic core and F(0) containing the membrane proton channel, linked together by a central stalk and a peripheral stalk. During catalysis, ATP synthesis in the catalytic domain of F(1) is coupled via a rotary mechanism of the central stalk subunits to proton translocation. In terms of biological role, this protein is part of the stalk that links CF(0) to CF(1). It either transmits conformational changes from CF(0) to CF(1) or is implicated in proton conduction. The polypeptide is ATP synthase subunit delta (Photorhabdus laumondii subsp. laumondii (strain DSM 15139 / CIP 105565 / TT01) (Photorhabdus luminescens subsp. laumondii)).